Here is a 568-residue protein sequence, read N- to C-terminus: AT-rich interactive domain-containing protein 3B (568 aa).

An N-acetylmethionine modification is found at Met1. Over residues 1–22 the composition is skewed to low complexity; that stretch reads MEPLQQQQQQQQQKQPQQPLLQ. Positions 1–174 are disordered; it reads MEPLQQQQQQ…SVPTAGQPSW (174 aa). The residue at position 87 (Ser87) is a Phosphoserine. Residues 88–107 are compositionally biased toward acidic residues; the sequence is EPEEEEGGLEDEDGDDDVAE. Basic and acidic residues predominate over residues 151 to 160; the sequence is TKEDHTKDAS. The tract at residues 201-374 is interaction with RB1; the sequence is SRDFAKLYEL…SSPKIRFSIL (174 aa). The ARID domain maps to 213-305; it reads DPERKEFLDD…YLYAYECEKK (93 aa). Ser309 carries the post-translational modification Phosphoserine. At Arg370 the chain carries Asymmetric dimethylarginine. A disordered region spans residues 378–403; it reads SSSGTSASSPRIPPASTLRKGDGVPV. The REKLES domain occupies 425–522; sequence GPLEHLRERL…GVLFAQKPVV (98 aa). The segment at 495 to 518 is interaction with ARID3A; sequence SNIGSINMSVDIDGTTYTGVLFAQ. The segment covering 529–559 has biased composition (low complexity); that stretch reads TPQSIGSSASSSNSSSSHCSPSPTSSRGTPS. Residues 529–568 are disordered; it reads TPQSIGSSASSSNSSSSHCSPSPTSSRGTPSAEPSTSWSL.

In terms of assembly, heterodimer with ARID3A. Interacts with unphosphorylated RB1. Expressed at high levels in testis. Also expressed in prostate, thyroid and thymus.

The protein localises to the nucleus. Its function is as follows. Transcription factor involved in the production of cranial mesenchymal tissues. Favors nuclear targeting of ARID3A. This Mus musculus (Mouse) protein is AT-rich interactive domain-containing protein 3B (Arid3b).